An 87-amino-acid chain; its full sequence is MNCLQLLLVLLLISTIAALHGDGRVPQRRGRNIRTMSNLLNFQTRDCPSSCPAVCPNQNECCDGDVCNYSNTLNKYFCIGCGSGGGE.

The first 18 residues, 1–18 (MNCLQLLLVLLLISTIAA), serve as a signal peptide directing secretion. Positions 19-34 (LHGDGRVPQRRGRNIR) are excised as a propeptide.

Contains 4 disulfide bonds. As to expression, expressed by the venom duct.

The protein resides in the secreted. Its function is as follows. May interact and inhibit Cav3.1/CACNA1G calcium channels. In a ex vivo model, shows ability to block nerve signal transduction. The protein is Conotoxin QcMNCL-XIII0.1 of Conus quercinus (Oak cone).